The primary structure comprises 141 residues: Hemoglobin subunit alpha-D (141 aa).

One can recognise a Globin domain in the interval 1–141 (MLTEDEKQLI…VSAVLAEKYR (141 aa)). Heme b is bound by residues histidine 58 and histidine 87.

Belongs to the globin family. As to quaternary structure, heterotetramer of two alpha-D chains and two beta chains. Red blood cells.

Its function is as follows. Involved in oxygen transport from the lung to the various peripheral tissues. The polypeptide is Hemoglobin subunit alpha-D (HBAD) (Chelonoidis carbonarius (Red-footed tortoise)).